Consider the following 167-residue polypeptide: Signal peptidase complex subunit 2 (167 aa).

The Cytoplasmic segment spans residues 1–36 (MPKYNVSDFKSKFDKELTNHFNKNGYKQSFVFEDIR). Residues 37–57 (LLIAIACIIPAGLAFGIEYVY) traverse the membrane as a helical segment. Over 58–68 (GFGVLKSYLKY) the chain is Lumenal. Residues 69–89 (LLPLYFLASCLLTFWSSVVKG) form a helical membrane-spanning segment. At 90 to 167 (STVYVATKKE…ISKYLSQIEN (78 aa)) the chain is on the cytoplasmic side.

Belongs to the SPCS2 family. Component of the signal peptidase complex (SPC) composed of a catalytic subunit sec11 and three accessory subunits spc1, spc2 and spc3. The complex induces a local thinning of the ER membrane which is used to measure the length of the signal peptide (SP) h-region of protein substrates. This ensures the selectivity of the complex towards h-regions shorter than 18-20 amino acids. SPC associates with the translocon complex.

Its subcellular location is the endoplasmic reticulum membrane. Its function is as follows. Component of the signal peptidase complex (SPC) which catalyzes the cleavage of N-terminal signal sequences from nascent proteins as they are translocated into the lumen of the endoplasmic reticulum. Enhances the enzymatic activity of SPC and facilitates the interactions between different components of the translocation site. This chain is Signal peptidase complex subunit 2 (spc2), found in Schizosaccharomyces pombe (strain 972 / ATCC 24843) (Fission yeast).